We begin with the raw amino-acid sequence, 404 residues long: 11-beta-hydroxysteroid dehydrogenase type 2 (404 aa).

NAD(+) is bound at residue 82 to 111 (TRAVLITGCDSGFGNATAKKLDTMGFTVLA). Residue S219 participates in substrate binding. Y232 (proton acceptor) is an active-site residue. The tract at residues 383–404 (LTSARDIAQDQGPRPDPSPTAQ) is disordered.

The protein belongs to the short-chain dehydrogenases/reductases (SDR) family. As to quaternary structure, interacts with ligand-free cytoplasmic NR3C2. In terms of tissue distribution, highly expressed in kidney, adrenal and colon; detected at lower levels on lung, liver, and spleen. Expressed in oocytes. Expressed in uterine tissues and in corpora lutea.

The protein resides in the microsome. It localises to the endoplasmic reticulum. The catalysed reaction is an 11beta-hydroxysteroid + NAD(+) = an 11-oxosteroid + NADH + H(+). It catalyses the reaction corticosterone + NAD(+) = 11-dehydrocorticosterone + NADH + H(+). It carries out the reaction cortisol + NAD(+) = cortisone + NADH + H(+). The enzyme catalyses 11beta,17beta-dihydroxyandrost-4-ene-3-one + NAD(+) = 17beta-hydroxyandrost-4-ene-3,11-dione + NADH + H(+). The catalysed reaction is 11beta-hydroxyandrost-4-ene-3,17-dione + NAD(+) = androst-4-ene-3,11,17-trione + NADH + H(+). The protein operates within steroid metabolism. Its activity is regulated as follows. Inhibited by glycyrrhetinic acid, carbenoloxone, 11-alpha-OH-progesterone and 11-beta-OH-progesterone. Catalyzes the conversion of biologically active 11beta-hydroxyglucocorticoids (11beta-hydroxysteroid) such as cortisol, to inactive 11-ketoglucocorticoids (11-oxosteroid) such as cortisone, in the presence of NAD(+). Functions as a dehydrogenase (oxidase), thereby decreasing the concentration of active glucocorticoids, thus protecting the nonselective mineralocorticoid receptor from occupation by glucocorticoids. Affinity towards corticosterone is higher than cortisol or dexamethasone. Plays an important role in maintaining glucocorticoids balance during preimplantation and protects the fetus from excessive maternal corticosterone exposure. Catalyzes the oxidation of 11beta-hydroxytestosterone (11beta,17beta-dihydroxyandrost-4-ene-3-one) to 11-ketotestosterone (17beta-hydroxyandrost-4-ene-3,11-dione), a major bioactive androgen. Catalyzes the conversion of 11beta-hydroxyandrostenedione (11beta-hydroxyandrost-4-ene-3,17-dione) to 11-ketoandrostenedione (androst-4-ene-3,11,17-trione), which can be further metabolized to 11-ketotestosterone. Converts 7-beta-25-dihydroxycholesterol to 7-oxo-25-hydroxycholesterol in vitro. 7-beta-25-dihydroxycholesterol (not 7-oxo-25-hydroxycholesterol) acts as ligand for the G-protein-coupled receptor (GPCR) Epstein-Barr virus-induced gene 2 (EBI2) and may thereby regulate immune cell migration. May protect ovulating oocytes and fertilizing spermatozoa from the adverse effects of cortisol. The polypeptide is 11-beta-hydroxysteroid dehydrogenase type 2 (HSD11B2) (Bos taurus (Bovine)).